The primary structure comprises 515 residues: Bifunctional purine biosynthesis protein PurH (515 aa).

An MGS-like domain is found at 1–145 (MTKRALISVS…KNHASVTVVV (145 aa)).

It belongs to the PurH family.

The enzyme catalyses (6R)-10-formyltetrahydrofolate + 5-amino-1-(5-phospho-beta-D-ribosyl)imidazole-4-carboxamide = 5-formamido-1-(5-phospho-D-ribosyl)imidazole-4-carboxamide + (6S)-5,6,7,8-tetrahydrofolate. The catalysed reaction is IMP + H2O = 5-formamido-1-(5-phospho-D-ribosyl)imidazole-4-carboxamide. Its pathway is purine metabolism; IMP biosynthesis via de novo pathway; 5-formamido-1-(5-phospho-D-ribosyl)imidazole-4-carboxamide from 5-amino-1-(5-phospho-D-ribosyl)imidazole-4-carboxamide (10-formyl THF route): step 1/1. The protein operates within purine metabolism; IMP biosynthesis via de novo pathway; IMP from 5-formamido-1-(5-phospho-D-ribosyl)imidazole-4-carboxamide: step 1/1. The chain is Bifunctional purine biosynthesis protein PurH from Streptococcus pyogenes serotype M2 (strain MGAS10270).